The following is an 886-amino-acid chain: Valine--tRNA ligase (886 aa).

The 'HIGH' region motif lies at 53-63; that stretch reads PNVTGSLHMGH. Positions 540–544 match the 'KMSKS' region motif; sequence KMSKS. Residue Lys-543 coordinates ATP. The stretch at 819–851 forms a coiled coil; it reads TIDVAAERRRLEKELAGAQKELASTAAKLANAD.

It belongs to the class-I aminoacyl-tRNA synthetase family. ValS type 1 subfamily. Monomer.

It localises to the cytoplasm. The catalysed reaction is tRNA(Val) + L-valine + ATP = L-valyl-tRNA(Val) + AMP + diphosphate. Catalyzes the attachment of valine to tRNA(Val). As ValRS can inadvertently accommodate and process structurally similar amino acids such as threonine, to avoid such errors, it has a 'posttransfer' editing activity that hydrolyzes mischarged Thr-tRNA(Val) in a tRNA-dependent manner. The sequence is that of Valine--tRNA ligase from Mycobacterium tuberculosis (strain CDC 1551 / Oshkosh).